The sequence spans 176 residues: Small ribosomal subunit protein uS5 (176 aa).

Residues 11-74 enclose the S5 DRBM domain; that stretch reads LSEVLVDVNR…QAAKKRMMKV (64 aa).

The protein belongs to the universal ribosomal protein uS5 family. In terms of assembly, part of the 30S ribosomal subunit. Contacts proteins S4 and S8.

With S4 and S12 plays an important role in translational accuracy. Functionally, located at the back of the 30S subunit body where it stabilizes the conformation of the head with respect to the body. In Rickettsia rickettsii (strain Iowa), this protein is Small ribosomal subunit protein uS5.